A 108-amino-acid chain; its full sequence is UPF0060 membrane protein Ent638_1931 (108 aa).

The next 4 helical transmembrane spans lie at 6–26 (LLFFATALCEIIGCFLPWLWL), 29–49 (GASVFLLLPAGIALALFVWLL), 61–81 (AAYGGVYVCTALLWLRVVDGV), and 85–105 (AYDWAGALVALCGMLIIVAGW).

It belongs to the UPF0060 family.

It is found in the cell inner membrane. In Enterobacter sp. (strain 638), this protein is UPF0060 membrane protein Ent638_1931.